A 197-amino-acid chain; its full sequence is Class A basic helix-loop-helix protein 15 (197 aa).

The span at 1-12 shows a compositional bias: basic residues; it reads MKTKNRPPRRRT. 2 disordered regions span residues 1–82 and 175–197; these read MKTK…ERER and TEDQ…REGS. Phosphothreonine is present on residues Thr12 and Thr25. The span at 27–36 shows a compositional bias: polar residues; sequence DRSQSGSGAS. The segment covering 65 to 82 has biased composition (basic and acidic residues); that stretch reads SRRENSVQRRLESNERER. In terms of domain architecture, bHLH spans 72-124; sequence QRRLESNERERQRMHKLNNAFQALREVIPHVRADKKLSKIETLTLAKNYIKSL.

As to quaternary structure, forms homodimers or heterodimers with TCF3 gene products E12 and E47. These dimers bind to the E-box site, however, heterodimer with MYOD1 does not bind target DNA. As to expression, expressed in liver, spleen and olfactory epithelium. Weaker expression is seen in skeletal muscle, cardiac muscle, eye and brain tissue.

Its subcellular location is the nucleus. Functionally, plays a role in controlling the transcriptional activity of MyoD, ensuring that expanding myoblast populations remain undifferentiated. Repression may occur through muscle-specific E-box occupancy by homodimers. May also negatively regulate bHLH-mediated transcription through an N-terminal repressor domain. Serves as a key regulator of acinar cell function, stability, and identity. Also required for normal organelle localization in exocrine cells and for mitochondrial calcium ion transport. May function as a unique regulator of gene expression in several different embryonic and postnatal cell lineages. Binds to the E-box consensus sequence 5'-CANNTG-3'. This chain is Class A basic helix-loop-helix protein 15 (Bhlha15), found in Rattus norvegicus (Rat).